Consider the following 194-residue polypeptide: MSTRNPQRKRRGGAVNSRQTQKRTRETTSTPEISLEAEPIELVETVGDEIVDLTCESLEPVVVDLTHNDSVVIVEERRRPRRNGRRLRQDHADSCVVSSDDEELSKDKDVYVTTHTPRSTKDEGTTGLRPSGTVSCPICMDGYSEIVQNGRLIVSTECGHVFCSQCLRDSLKNANTCPTCRKKINHKRYHPIYI.

A compositionally biased stretch (basic residues) spans 1–12 (MSTRNPQRKRRG). The interval 1–20 (MSTRNPQRKRRGGAVNSRQT) is required for ubiquitination activity. The disordered stretch occupies residues 1–36 (MSTRNPQRKRRGGAVNSRQTQKRTRETTSTPEISLE). A mediates interaction with TRPS1 region spans residues 6-65 (PQRKRRGGAVNSRQTQKRTRETTSTPEISLEAEPIELVETVGDEIVDLTCESLEPVVVDL). Short sequence motifs (SUMO interaction motif) lie at residues 40–43 (IELV), 50–53 (IVDL), 61–63 (VVV), and 71–74 (VVIV). A phosphoserine mark is found at S98 and S99. Residues C136, C139, C158, H160, C163, C166, C177, and C180 each contribute to the Zn(2+) site. An RING-type zinc finger spans residues 136-181 (CPICMDGYSEIVQNGRLIVSTECGHVFCSQCLRDSLKNANTCPTCR).

As to quaternary structure, homodimer (via RING-type zinc finger domain). Interacts with GSC2. Interacts with AR/the androgen receptor and TBP. Interacts with TCF20. Interacts with PATZ1. Interacts with TRPS1; negatively regulates TRPS1 transcriptional repressor activity. Interacts with PML (isoform PML-1, isoform PML-2, isoform PML-3, isoform PML-4, isoform PML-5 and isoform PML-6). Interacts with PRDM1/Blimp-1. Post-translationally, sumoylated; conjugated by one or two SUMO1 moieties. In terms of processing, autoubiquitinated. As to expression, widely expressed with highest levels in testis.

The protein localises to the cytoplasm. It localises to the nucleus. The protein resides in the nucleoplasm. Its subcellular location is the PML body. The enzyme catalyses S-ubiquitinyl-[E2 ubiquitin-conjugating enzyme]-L-cysteine + [acceptor protein]-L-lysine = [E2 ubiquitin-conjugating enzyme]-L-cysteine + N(6)-ubiquitinyl-[acceptor protein]-L-lysine.. Its pathway is protein modification; protein ubiquitination. Functionally, E3 ubiquitin-protein ligase which binds polysumoylated chains covalently attached to proteins and mediates 'Lys-6'-, 'Lys-11'-, 'Lys-48'- and 'Lys-63'-linked polyubiquitination of those substrates and their subsequent targeting to the proteasome for degradation. Regulates the degradation of several proteins including PML and the transcriptional activator PEA3. Involved in chromosome alignment and spindle assembly, it regulates the kinetochore CENPH-CENPI-CENPK complex by targeting polysumoylated CENPI to proteasomal degradation. Regulates the cellular responses to hypoxia and heat shock through degradation of respectively EPAS1 and PARP1. Alternatively, it may also bind DNA/nucleosomes and have a more direct role in the regulation of transcription for instance enhancing basal transcription and steroid receptor-mediated transcriptional activation. Catalyzes ubiquitination of sumoylated PARP1 in response to PARP1 trapping to chromatin, leading to PARP1 removal from chromatin by VCP/p97. The sequence is that of E3 ubiquitin-protein ligase RNF4 from Rattus norvegicus (Rat).